The sequence spans 245 residues: Chromosome partition protein MukE (245 aa).

The tract at residues 213-245 (PESIAAEKATADDESAVSNEEDFEYDDNQEGAE) is disordered. Residues 224–245 (DDESAVSNEEDFEYDDNQEGAE) are compositionally biased toward acidic residues.

This sequence belongs to the MukE family. As to quaternary structure, interacts, and probably forms a ternary complex, with MukF and MukB. The complex formation is stimulated by calcium or magnesium.

The protein resides in the cytoplasm. The protein localises to the nucleoid. Functionally, involved in chromosome condensation, segregation and cell cycle progression. May participate in facilitating chromosome segregation by condensation DNA from both sides of a centrally located replisome during cell division. Probably acts via its interaction with MukB and MukF. The chain is Chromosome partition protein MukE from Actinobacillus succinogenes (strain ATCC 55618 / DSM 22257 / CCUG 43843 / 130Z).